The chain runs to 1150 residues: Cell division cycle and apoptosis regulator protein 1 (1150 aa).

Positions 1-249 are interaction with AR; that stretch reads MAQFGGQKNP…TQPQPQSLLQ (249 aa). Disordered regions lie at residues 124–146 and 285–354; these read PTAQITVSYPTPRSSQQQTQPQK and IVSQ…SPRR. Residues 134-146 show a composition bias toward low complexity; that stretch reads TPRSSQQQTQPQK. Residues 203–660 form an interaction with GATA2 region; the sequence is QRIQTLPNQN…RALSSKGLKS (458 aa). Composition is skewed to basic and acidic residues over residues 293 to 334 and 341 to 352; these read RRLD…ERSP and ERSPRRERERSP. A Phosphoserine modification is found at Ser456. Residues 594–618 are a coiled coil; that stretch reads KQQLVEKLQGERKEADGEQDEEEKD. Residues 600–638 form a disordered region; the sequence is KLQGERKEADGEQDEEEKDDGEAKEISTPTHWSKLDPKT. A compositionally biased stretch (acidic residues) spans 610–621; that stretch reads GEQDEEEKDDGE. Thr627 carries the phosphothreonine modification. The region spanning 636 to 670 is the SAP domain; that stretch reads PKTMKVNDLRKELESRALSSKGLKSQLIARLTKQL. Lys637 participates in a covalent cross-link: Glycyl lysine isopeptide (Lys-Gly) (interchain with G-Cter in ubiquitin). Positions 643 to 1150 are interaction with GATA1; sequence DLRKELESRA…QKSKENGASV (508 aa). A Phosphothreonine modification is found at Thr667. 4 stretches are compositionally biased toward basic and acidic residues: residues 673–687, 694–713, 796–817, and 832–855; these read EEQKEEQKELEKSEK, DRKSEDDKEEEERKRQEEIE, KEDKKEKDKKSKKDERKDKKEE, and SGDDKDKKEDRDERKKEDKRKDDS. Disordered regions lie at residues 673–713 and 796–915; these read EEQK…EEIE and KEDK…EKEK. Residues Ser685 and Ser697 each carry the phosphoserine modification. The span at 856 to 889 shows a compositional bias: acidic residues; that stretch reads KDDDETEEDNNQDEYDPMEAEEAEDEEDDRDEEE. Thr861 is subject to Phosphothreonine. Basic and acidic residues predominate over residues 890–915; it reads MTKRDDKRDINRYCKERPSKDKEKEK. A Glycyl lysine isopeptide (Lys-Gly) (interchain with G-Cter in SUMO1); alternate cross-link involves residue Lys1012. Lys1012 participates in a covalent cross-link: Glycyl lysine isopeptide (Lys-Gly) (interchain with G-Cter in SUMO2); alternate. Residues 1033 to 1114 adopt a coiled-coil conformation; that stretch reads DVGSLLQKLE…LQFENQMNKT (82 aa). Glycyl lysine isopeptide (Lys-Gly) (interchain with G-Cter in SUMO2) cross-links involve residues Lys1067 and Lys1135.

In terms of assembly, directly interacts with ESR1, NR3C1 and p53/TP53. Interacts (via N-terminus) with CALCOCO1. Interacts with MED1. Interacts with GATA1. Interacts with AR and GATA2. Expressed in various epithelial cancer cell lines, including breast, colon, prostate, pancreatic and leukemia. Expression is regulated by growth factors.

The protein localises to the cytoplasm. The protein resides in the perinuclear region. Associates with components of the Mediator and p160 coactivator complexes that play a role as intermediaries transducing regulatory signals from upstream transcriptional activator proteins to basal transcription machinery at the core promoter. Recruited to endogenous nuclear receptor target genes in response to the appropriate hormone. Also functions as a p53 coactivator. May thus play an important role in transcriptional regulation. May be involved in apoptosis signaling in the presence of the reinoid CD437. Apoptosis induction involves sequestration of 14-3-3 protein(s) and mediated altered expression of multiple cell cycle regulatory genes including MYC, CCNB1 and CDKN1A. Plays a role in cell cycle progression and/or cell proliferation. In association with CALCOCO1 enhances GATA1- and MED1-mediated transcriptional activation from the gamma-globin promoter during erythroid differentiation of K562 erythroleukemia cells. Can act as a both a coactivator and corepressor of AR-mediated transcription. Contributes to chromatin looping and AR transcription complex assembly by stabilizing AR-GATA2 association on chromatin and facilitating MED1 and RNA polymerase II recruitment to AR-binding sites. May play an important role in the growth and tumorigenesis of prostate cancer cells. This is Cell division cycle and apoptosis regulator protein 1 (CCAR1) from Homo sapiens (Human).